A 136-amino-acid polypeptide reads, in one-letter code: MSLIQEFKAFASRGNVIDMAVGIIIGAAFGKIVSSFVADIIMPPIGIILGGVNFSDLSVVLLAAQGDAPAVVIAYGKFIQTVIDFTIIAFAIFMGLKAINSLKRKQEEAPPASPAPTKDQELLSEIRDLLKAQQEK.

Transmembrane regions (helical) follow at residues 9–29, 32–52, 54–74, and 79–99; these read AFASRGNVIDMAVGIIIGAAF, IVSSFVADIIMPPIGIILGGV, FSDLSVVLLAAQGDAPAVVIA, and IQTVIDFTIIAFAIFMGLKAI.

Belongs to the MscL family. As to quaternary structure, homopentamer.

It is found in the cell inner membrane. Functionally, channel that opens in response to stretch forces in the membrane lipid bilayer. May participate in the regulation of osmotic pressure changes within the cell. This is Large-conductance mechanosensitive channel from Shewanella oneidensis (strain ATCC 700550 / JCM 31522 / CIP 106686 / LMG 19005 / NCIMB 14063 / MR-1).